The following is a 279-amino-acid chain: 3-methyl-2-oxobutanoate hydroxymethyltransferase (279 aa).

Residues aspartate 44 and aspartate 83 each contribute to the Mg(2+) site. Residues 44–45 (DS), aspartate 83, and lysine 112 each bind 3-methyl-2-oxobutanoate. Glutamate 114 provides a ligand contact to Mg(2+). Glutamate 181 acts as the Proton acceptor in catalysis.

The protein belongs to the PanB family. In terms of assembly, homodecamer; pentamer of dimers. Requires Mg(2+) as cofactor.

Its subcellular location is the cytoplasm. It catalyses the reaction 3-methyl-2-oxobutanoate + (6R)-5,10-methylene-5,6,7,8-tetrahydrofolate + H2O = 2-dehydropantoate + (6S)-5,6,7,8-tetrahydrofolate. It participates in cofactor biosynthesis; coenzyme A biosynthesis. Its function is as follows. Catalyzes the reversible reaction in which hydroxymethyl group from 5,10-methylenetetrahydrofolate is transferred onto alpha-ketoisovalerate to form ketopantoate. This chain is 3-methyl-2-oxobutanoate hydroxymethyltransferase, found in Nitrosopumilus maritimus (strain SCM1).